Here is a 544-residue protein sequence, read N- to C-terminus: Intercellular adhesion molecule 3 (544 aa).

A signal peptide spans 1 to 31 (MIASGPPPRVYWTSLIFLLLACCLLPTGAQG). Residues 32-486 (QTYQVRVEPK…MMDVQGRNPV (455 aa)) are Extracellular-facing. One can recognise an Ig-like C2-type 1 domain in the interval 48–105 (GEPLVVNCTLDCPGPGLISLETALSKEPHSRGLGWAAFRLTNVTGDMEILCSGICNKS). N-linked (GlcNAc...) asparagine glycosylation is found at N54, N89, N103, N112, N138, N190, N209, N243, N267, N296, N321, and N326. 2 cysteine pairs are disulfide-bonded: C55-C98 and C59-C102. One can recognise an Ig-like C2-type 2 domain in the interval 134–200 (GEELNLSCLV…FSCRSELDLR (67 aa)). C141 and C193 are oxidised to a cystine. Positions 237–302 (ETSWPVNCSL…IVCNVTLGVE (66 aa)) constitute an Ig-like C2-type 3 domain. A disulfide bridge connects residues C244 and C295. Residues 330–383 (GTPVTVTCAAGPQVQVMLDGVPAAVPGQPAQLQLKATEMDDRRTFFCNATLKVH) form the Ig-like C2-type 4 domain. C337 and C376 are oxidised to a cystine. 3 N-linked (GlcNAc...) asparagine glycosylation sites follow: N377, N390, and N456. An Ig-like C2-type 5 domain is found at 417 to 470 (KTMHILQCQARGNPNPQLQCLREGSKFKVPVGIPFLVLLNYSGTYSCQAASSRG). A disulfide bridge links C424 with C463. A helical transmembrane segment spans residues 487 to 511 (TINIVLGVLAILGLVTLAAASVYVF). Over 512–544 (WVQRQHDIYHLTPRSTRWRLTSTQPVTVAEELS) the chain is Cytoplasmic.

The protein belongs to the immunoglobulin superfamily. ICAM family. Interacts with moesin/MSN. In terms of tissue distribution, leukocytes.

Its subcellular location is the membrane. Its function is as follows. ICAM proteins are ligands for the leukocyte adhesion protein LFA-1 (integrin alpha-L/beta-2). ICAM3 is also a ligand for integrin alpha-D/beta-2. In association with integrin alpha-L/beta-2, contributes to apoptotic neutrophil phagocytosis by macrophages. The sequence is that of Intercellular adhesion molecule 3 (ICAM3) from Bos taurus (Bovine).